A 276-amino-acid chain; its full sequence is Halorhodopsin (276 aa).

The propeptide occupies 1–21 (MTAASTTATTMLQATQSDVLQ). The Extracellular portion of the chain corresponds to 22–25 (EIQS). A helical membrane pass occupies residues 26-51 (NFLLNSSIWVNIALAGVVILLFVAMG). The Cytoplasmic segment spans residues 52–57 (RDIESP). The helical transmembrane segment at 58–81 (RAKLIWVATMLVPLVSISSYAGLA) threads the bilayer. Residues 82–105 (SGLTVGFLQMPPGHALAGQEVLSP) are Extracellular-facing. The helical transmembrane segment at 106–127 (WGRYLTWTFSTPMILLALGLLA) threads the bilayer. Residues 128 to 130 (DTD) lie on the Cytoplasmic side of the membrane. Residues 131–154 (IASLFTAITMDIGMCVTGLAAALI) traverse the membrane as a helical segment. Topologically, residues 155 to 157 (TSS) are extracellular. Residues 158 to 180 (HLLRWVFYGISCAFFVAVLYVLL) form a helical membrane-spanning segment. Residues 181–192 (VQWPADAEAAGT) lie on the Cytoplasmic side of the membrane. Residues 193 to 216 (SEIFGTLKILTVVLWLGYPILWAL) form a helical membrane-spanning segment. Residues 217 to 225 (GSEGVALLS) lie on the Extracellular side of the membrane. Residues 226 to 254 (VGVTSWGYSGLDILAKYVFAFLLLRWVAA) form a helical membrane-spanning segment. Lysine 241 is subject to N6-(retinylidene)lysine. Residues 255-276 (NEGAVSGSGMSIGSGGAAPADD) are Cytoplasmic-facing.

The protein belongs to the archaeal/bacterial/fungal opsin family.

Its subcellular location is the cell membrane. Light-driven chloride pump. The protein is Halorhodopsin (hop) of Halobacterium halobium (strain port).